The primary structure comprises 273 residues: Undecaprenyl-diphosphatase (273 aa).

8 helical membrane passes run 4–24 (MELW…FAPV), 48–68 (AANT…VVVF), 89–109 (LNLI…VLFE), 116–136 (LFST…MIAA), 152–172 (ITYK…WPGF), 193–213 (ADFT…LSLL), 222–242 (ADIP…LLAI), and 252–272 (IRLV…YFLY).

This sequence belongs to the UppP family.

Its subcellular location is the cell membrane. The catalysed reaction is di-trans,octa-cis-undecaprenyl diphosphate + H2O = di-trans,octa-cis-undecaprenyl phosphate + phosphate + H(+). Functionally, catalyzes the dephosphorylation of undecaprenyl diphosphate (UPP). Confers resistance to bacitracin. The chain is Undecaprenyl-diphosphatase from Geobacillus kaustophilus (strain HTA426).